The primary structure comprises 218 residues: Protein-L-isoaspartate O-methyltransferase (218 aa).

The active site involves S60.

The protein belongs to the methyltransferase superfamily. L-isoaspartyl/D-aspartyl protein methyltransferase family.

The protein resides in the cytoplasm. It carries out the reaction [protein]-L-isoaspartate + S-adenosyl-L-methionine = [protein]-L-isoaspartate alpha-methyl ester + S-adenosyl-L-homocysteine. Functionally, catalyzes the methyl esterification of L-isoaspartyl residues in peptides and proteins that result from spontaneous decomposition of normal L-aspartyl and L-asparaginyl residues. It plays a role in the repair and/or degradation of damaged proteins. In Roseiflexus sp. (strain RS-1), this protein is Protein-L-isoaspartate O-methyltransferase.